The following is a 788-amino-acid chain: MSDPEEERVADSTAHYEEAGKVISIPRPSDEAEGSDVMPEQDDEVQELTTESEENVERHSEFSLSTPKSDDSKPREEVTSLGSASGSQDQDYRLLDYQKGEDDELLFLHKIKAIKETLQTSVRESIATVKIVLIPAGQEIIMPFRVDAPFRFLKEHFAHLLHIPHYVLQITHEGIIVGNNESLIQYGIKPQEIVQVEVFSTLPDQYPVRRIEGLSEGSQIITVTIQTSIDRYEEVAVEIIKSDFHKPFLGGFRHKITGLEYHNAGTQTVPRKIPEKDNLFCRDTQTVFQKKKLQQTTNTTSTQMTKIGVYVSNMTDKLLKPGNYFSAAEYHARRLHAVIVIQTSYRRWHAKRYVESLRKQKKLRLEWEEEQELLKIQEKEEWIRMDYYRRHNPKTTEDFELLYNALELWRQEEVEQICHYSSEAERKAALCELLEKETQMIASIGRHRSAARMERQDAAIQAFLDKCSAPNVWRRGDGKTIEMDTQFTIRARELQSIYKCILLKDLSQDERLDILLTLKHTVKEHECKLTQEILELIDREVDLMMRGVKPHNLEGLRKRITTLFIHYIKTPLFNPEVAKYLKVPQDPLKFYDTIYFCHSCQNYLPSVEFSVSPTSHRVYRCRHCINLENETQRRESFLKYKCLLQRLYYSEADYGDNSQIAFLMQLQDIKYLTENIWASQSALSAWDDLNDLVMVRWDKHVEWSPWNCILLTKDESTAHLRLPSIEKGYGHHFVHKIKHKHILAKNYFSQIPTLASLILNDDEVEDIRSKHSTKSPPKIIITRRIQPH.

Residues 1–89 (MSDPEEERVA…SLGSASGSQD (89 aa)) are disordered. Over residues 7-20 (ERVADSTAHYEEAG) the composition is skewed to basic and acidic residues. Residues 31–54 (EAEGSDVMPEQDDEVQELTTESEE) are compositionally biased toward acidic residues. A compositionally biased stretch (basic and acidic residues) spans 68-78 (KSDDSKPREEV). The segment covering 80–89 (SLGSASGSQD) has biased composition (polar residues). Positions 127–203 (ATVKIVLIPA…VQVEVFSTLP (77 aa)) constitute a Ubiquitin-like domain. In terms of domain architecture, IQ spans 334 to 363 (RLHAVIVIQTSYRRWHAKRYVESLRKQKKL).

Component of the axonemal radial spoke 1 (RS1) complex, at least composed of spoke head proteins RSPH1, RSPH3B, RSPH9 and the cilia-specific component RSPH4A or sperm-specific component RSPH6A, spoke stalk proteins RSPH14, DNAJB13, DYDC1, ROPN1L and NME5, and the anchor protein IQUB. Does not appear to be part of radial spoke complexes 2 or 3 (RS2 or RS3). Interacts with CALM1. Interacts with DNAJB13. Interacts with DYNLL2. Interacts with NME5. Interacts with RSPH3. Interacts with RSPH9. Interacts with ZMYND10. Interacts with calmodulin; the interaction occurs in conditions of low but not high calcium. As to expression, expressed in the flagellum of sperm cells and cilia of tracheal epithelial cells (at protein level). High expression in testis, also present in brain and lung.

The protein resides in the cytoplasm. Its subcellular location is the cytoskeleton. The protein localises to the flagellum axoneme. It localises to the cell projection. It is found in the cilium. Anchors the radial spoke 1 (RS1) complex to the A microtubule of outer doublet microtubules in axonemes. The triple radial spokes (RS1, RS2 and RS3) are required to modulate beating of the sperm flagellum. May play a role in inhibiting signaling via MAPK1/ERK2 and MAPK3/ERK1. Additionally, may play a role in the functioning of cilia. Not required for the functioning of tracheal or ependymal cilia. The protein is IQ motif and ubiquitin-like domain-containing protein (Iqub) of Mus musculus (Mouse).